A 64-amino-acid chain; its full sequence is Hypoxia-inducible lipid droplet-associated protein (64 aa).

The segment at Met-1 to Gly-37 is required for targeting to lipid droplets. Residues Leu-7–Met-24 form a helical membrane-spanning segment. Residues Thr-42–Pro-51 show a composition bias toward polar residues. Residues Thr-42–Gln-64 are disordered. Over residues Leu-55–Gln-64 the composition is skewed to basic and acidic residues.

The protein resides in the lipid droplet. Its subcellular location is the secreted. It localises to the membrane. Functionally, increases intracellular lipid accumulation. Stimulates expression of cytokines including IL6, MIF and VEGFA. Enhances cell growth and proliferation. The polypeptide is Hypoxia-inducible lipid droplet-associated protein (Hilpda) (Mus musculus (Mouse)).